Reading from the N-terminus, the 129-residue chain is Putative pre-16S rRNA nuclease (129 aa).

This sequence belongs to the YqgF nuclease family.

The protein resides in the cytoplasm. Its function is as follows. Could be a nuclease involved in processing of the 5'-end of pre-16S rRNA. The polypeptide is Putative pre-16S rRNA nuclease (Campylobacter jejuni subsp. doylei (strain ATCC BAA-1458 / RM4099 / 269.97)).